The chain runs to 215 residues: 3-isopropylmalate dehydratase small subunit (215 aa).

It belongs to the LeuD family. LeuD type 1 subfamily. Heterodimer of LeuC and LeuD.

It carries out the reaction (2R,3S)-3-isopropylmalate = (2S)-2-isopropylmalate. It functions in the pathway amino-acid biosynthesis; L-leucine biosynthesis; L-leucine from 3-methyl-2-oxobutanoate: step 2/4. Its function is as follows. Catalyzes the isomerization between 2-isopropylmalate and 3-isopropylmalate, via the formation of 2-isopropylmaleate. This Cellvibrio japonicus (strain Ueda107) (Pseudomonas fluorescens subsp. cellulosa) protein is 3-isopropylmalate dehydratase small subunit.